Here is a 317-residue protein sequence, read N- to C-terminus: Acetyl-coenzyme A carboxylase carboxyl transferase subunit alpha (317 aa).

The 255-residue stretch at 39 to 293 (RLESKAAAAL…EEAIAEGLAG (255 aa)) folds into the CoA carboxyltransferase C-terminal domain.

This sequence belongs to the AccA family. As to quaternary structure, acetyl-CoA carboxylase is a heterohexamer composed of biotin carboxyl carrier protein (AccB), biotin carboxylase (AccC) and two subunits each of ACCase subunit alpha (AccA) and ACCase subunit beta (AccD).

It is found in the cytoplasm. The enzyme catalyses N(6)-carboxybiotinyl-L-lysyl-[protein] + acetyl-CoA = N(6)-biotinyl-L-lysyl-[protein] + malonyl-CoA. The protein operates within lipid metabolism; malonyl-CoA biosynthesis; malonyl-CoA from acetyl-CoA: step 1/1. Functionally, component of the acetyl coenzyme A carboxylase (ACC) complex. First, biotin carboxylase catalyzes the carboxylation of biotin on its carrier protein (BCCP) and then the CO(2) group is transferred by the carboxyltransferase to acetyl-CoA to form malonyl-CoA. The protein is Acetyl-coenzyme A carboxylase carboxyl transferase subunit alpha of Methylobacterium sp. (strain 4-46).